A 428-amino-acid chain; its full sequence is Enolase 1 (428 aa).

The segment at 38 to 58 (EVPSGASTGENEAVELRDGGS) is disordered. Glutamine 163 contributes to the (2R)-2-phosphoglycerate binding site. Catalysis depends on glutamate 205, which acts as the Proton donor. Mg(2+)-binding residues include aspartate 242, glutamate 286, and aspartate 313. (2R)-2-phosphoglycerate-binding residues include lysine 338, arginine 367, serine 368, and lysine 389. The Proton acceptor role is filled by lysine 338.

The protein belongs to the enolase family. Mg(2+) serves as cofactor.

It is found in the cytoplasm. It localises to the secreted. The protein resides in the cell surface. The catalysed reaction is (2R)-2-phosphoglycerate = phosphoenolpyruvate + H2O. It participates in carbohydrate degradation; glycolysis; pyruvate from D-glyceraldehyde 3-phosphate: step 4/5. Its function is as follows. Catalyzes the reversible conversion of 2-phosphoglycerate (2-PG) into phosphoenolpyruvate (PEP). It is essential for the degradation of carbohydrates via glycolysis. This is Enolase 1 from Lactobacillus gasseri (strain ATCC 33323 / DSM 20243 / BCRC 14619 / CIP 102991 / JCM 1131 / KCTC 3163 / NCIMB 11718 / NCTC 13722 / AM63).